The sequence spans 188 residues: PRA1 family protein 3 (188 aa).

Met-1 bears the N-acetylmethionine mark. Residues 1–35 lie on the Cytoplasmic side of the membrane; sequence MDVNIAPLRAWDDFFPGSDRFARPDFRDISKWNNR. Transmembrane regions (helical) follow at residues 36–56 and 57–77; these read VVSNLLYYQTNYLVVAAMMIS and VVGFLSPFNMILGGIVVVLVF. At 78 to 93 the chain is on the cytoplasmic side; sequence TGFVWAAHNKDILRRM. Helical transmembrane passes span 94-114 and 115-135; these read KKQYPTAFVMVVMLASYFLIS and LFGGVMVFVFGITFPLLLMFI. Positions 103 to 117 are required for homodimer formation and heterodimer formation with ARL6IP1; that stretch reads MVVMLASYFLISLFG. The Cytoplasmic segment spans residues 136–188; sequence HASLRLRNLKNKLENKMEEIGLKRTPMGIVLDALEQQEETITKFSDYISKMKE. A targeting to endoplasmic reticulum membrane region spans residues 136-188; sequence HASLRLRNLKNKLENKMEEIGLKRTPMGIVLDALEQQEETITKFSDYISKMKE.

The protein belongs to the PRA1 family. In terms of assembly, homodimer. Heterodimer with ARL6IP1. Forms multimers. Interacts with ARL6. Interacts with prenylated RAB1A and RAB3A. Interacts with SLC1A1/EAAC1. Interacts with RTN2 (via first transmembrane domain). Does not interact with VAMP1, VAMP2 or VAMP3.

The protein localises to the endoplasmic reticulum membrane. Its subcellular location is the cell membrane. It is found in the cytoplasm. It localises to the cytoskeleton. Functionally, regulates intracellular concentrations of taurine and glutamate. Negatively modulates SLC1A1/EAAC1 glutamate transport activity by decreasing its affinity for glutamate in a PKC activity-dependent manner. Plays a role in the retention of SLC1A1/EAAC1 in the endoplasmic reticulum. In Bos taurus (Bovine), this protein is PRA1 family protein 3 (ARL6IP5).